A 159-amino-acid polypeptide reads, in one-letter code: 3-hydroxyacyl-[acyl-carrier-protein] dehydratase FabZ (159 aa).

The active site involves His59.

It belongs to the thioester dehydratase family. FabZ subfamily.

The protein localises to the cytoplasm. It catalyses the reaction a (3R)-hydroxyacyl-[ACP] = a (2E)-enoyl-[ACP] + H2O. Its function is as follows. Involved in unsaturated fatty acids biosynthesis. Catalyzes the dehydration of short chain beta-hydroxyacyl-ACPs and long chain saturated and unsaturated beta-hydroxyacyl-ACPs. The polypeptide is 3-hydroxyacyl-[acyl-carrier-protein] dehydratase FabZ (Caulobacter vibrioides (strain ATCC 19089 / CIP 103742 / CB 15) (Caulobacter crescentus)).